We begin with the raw amino-acid sequence, 374 residues long: Nucleosome assembly protein 1;1 (374 aa).

The stretch at 26-80 (VNALKNKLQDITGKPTNVLECLSPNVRKRVEVLKEIQSQHDELEAKFYEERAVLE) forms a coiled coil. A Nuclear export signal motif is present at residues 47-62 (LSPNVRKRVEVLKEIQ). Residues 223-228 (KKKPKK) carry the Nuclear localization signal motif. A compositionally biased stretch (acidic residues) spans 299–339 (AAEDDFADLEDDDDDDEEDDDDEDEEEEDDEDDEDEEDEDD). Positions 299 to 374 (AAEDDFADLE…GERPPECKQQ (76 aa)) are disordered. Positions 343–355 (KKKSSAVRKRGVR) are enriched in basic residues. Cys371 carries the cysteine methyl ester modification. Residue Cys371 is the site of S-farnesyl cysteine attachment. Residues 372 to 374 (KQQ) constitute a propeptide, removed in mature form.

It belongs to the nucleosome assembly protein (NAP) family. As to quaternary structure, binds preferentially histones H4 and H1 in vitro. Interacts with CYCB1;1.

It localises to the nucleus. Its subcellular location is the cytoplasm. Its function is as follows. May modulate chromatin structure by regulation of nucleosome assembly/disassembly. Could function together with B-type cyclins in the regulation of microtubule dynamics. This is Nucleosome assembly protein 1;1 (NAP1;1) from Nicotiana tabacum (Common tobacco).